A 477-amino-acid polypeptide reads, in one-letter code: Glutamate--tRNA ligase 2 (477 aa).

The 'HIGH' region signature appears at 12–22; it reads PSPTGRMHLGN. 4 residues coordinate Zn(2+): C109, C111, C136, and H138. The short motif at 253 to 257 is the 'KMSKS' region element; the sequence is PLSKR. Position 256 (K256) interacts with ATP.

It belongs to the class-I aminoacyl-tRNA synthetase family. Glutamate--tRNA ligase type 1 subfamily. As to quaternary structure, monomer. Zn(2+) serves as cofactor.

It localises to the cytoplasm. The enzyme catalyses tRNA(Glu) + L-glutamate + ATP = L-glutamyl-tRNA(Glu) + AMP + diphosphate. Functionally, catalyzes the attachment of glutamate to tRNA(Glu) in a two-step reaction: glutamate is first activated by ATP to form Glu-AMP and then transferred to the acceptor end of tRNA(Glu). The sequence is that of Glutamate--tRNA ligase 2 from Alkalilimnicola ehrlichii (strain ATCC BAA-1101 / DSM 17681 / MLHE-1).